Reading from the N-terminus, the 555-residue chain is Synaptotagmin-14 (555 aa).

At 1 to 24 (MAIEGGERTCGVHELICIRKVSPE) the chain is on the extracellular side. A helical; Signal-anchor for type III membrane protein transmembrane segment spans residues 25–47 (AVGFLSAVGVFIILMLLLFLYIN). The Cytoplasmic segment spans residues 48-555 (KKFCFENVGG…VCRWHALLES (508 aa)). 2 disordered regions span residues 157-179 (TPPLDELQPPPYQDDSGSPHLSC) and 222-257 (GYEEDVPSDSTAVLSPEDMSAQGSSSQLPKPFDPEP). C2 domains are found at residues 260 to 379 (KYGT…SLPV) and 415 to 550 (SVPE…CRWH).

This sequence belongs to the synaptotagmin family. As to quaternary structure, homodimer. Can also form heterodimers. In terms of tissue distribution, highly expressed in fetal and adult brain tissue.

It is found in the membrane. May be involved in the trafficking and exocytosis of secretory vesicles in non-neuronal tissues. Is Ca(2+)-independent. The chain is Synaptotagmin-14 (SYT14) from Homo sapiens (Human).